Consider the following 518-residue polypeptide: Bifunctional purine biosynthesis protein PurH (518 aa).

Residues 1-144 (MSKRALISVS…KNHAAVTVVC (144 aa)) enclose the MGS-like domain.

It belongs to the PurH family.

It catalyses the reaction (6R)-10-formyltetrahydrofolate + 5-amino-1-(5-phospho-beta-D-ribosyl)imidazole-4-carboxamide = 5-formamido-1-(5-phospho-D-ribosyl)imidazole-4-carboxamide + (6S)-5,6,7,8-tetrahydrofolate. The catalysed reaction is IMP + H2O = 5-formamido-1-(5-phospho-D-ribosyl)imidazole-4-carboxamide. The protein operates within purine metabolism; IMP biosynthesis via de novo pathway; 5-formamido-1-(5-phospho-D-ribosyl)imidazole-4-carboxamide from 5-amino-1-(5-phospho-D-ribosyl)imidazole-4-carboxamide (10-formyl THF route): step 1/1. Its pathway is purine metabolism; IMP biosynthesis via de novo pathway; IMP from 5-formamido-1-(5-phospho-D-ribosyl)imidazole-4-carboxamide: step 1/1. In Lactococcus lactis subsp. cremoris (strain MG1363), this protein is Bifunctional purine biosynthesis protein PurH.